The chain runs to 88 residues: Small ribosomal subunit protein bS20 (88 aa).

Belongs to the bacterial ribosomal protein bS20 family.

Binds directly to 16S ribosomal RNA. The chain is Small ribosomal subunit protein bS20 from Mycoplasmopsis synoviae (strain 53) (Mycoplasma synoviae).